We begin with the raw amino-acid sequence, 255 residues long: MALAKRIIPCLDVKDGRVVKGVNFIGLRDAGDPVEAAKRYNGEGADELTFLDITASSDNRDTILHIIEEVAGQVFIPLTVGGGVRTVADIRRLLNAGADKVSINTAAVTRPDLIDEAAGFFGSQAIVAAVDAKAVNSENTRWEIFTHGGRNPTGLDAVEWAIEMQKRGAGEILLTGMDRDGTKQGFNLPLTRAVAEAVDIPVIASGGVGNVRHLIEGITEGKADAVLAAGIFHFGEIAIREAKRAMREAGIEVRL.

Catalysis depends on residues Asp12 and Asp131.

The protein belongs to the HisA/HisF family. In terms of assembly, heterodimer of HisH and HisF.

Its subcellular location is the cytoplasm. The enzyme catalyses 5-[(5-phospho-1-deoxy-D-ribulos-1-ylimino)methylamino]-1-(5-phospho-beta-D-ribosyl)imidazole-4-carboxamide + L-glutamine = D-erythro-1-(imidazol-4-yl)glycerol 3-phosphate + 5-amino-1-(5-phospho-beta-D-ribosyl)imidazole-4-carboxamide + L-glutamate + H(+). Its pathway is amino-acid biosynthesis; L-histidine biosynthesis; L-histidine from 5-phospho-alpha-D-ribose 1-diphosphate: step 5/9. IGPS catalyzes the conversion of PRFAR and glutamine to IGP, AICAR and glutamate. The HisF subunit catalyzes the cyclization activity that produces IGP and AICAR from PRFAR using the ammonia provided by the HisH subunit. This is Imidazole glycerol phosphate synthase subunit HisF from Neisseria meningitidis serogroup C / serotype 2a (strain ATCC 700532 / DSM 15464 / FAM18).